Consider the following 397-residue polypeptide: G2/mitotic-specific cyclin-B1 (397 aa).

Belongs to the cyclin family. Cyclin AB subfamily. As to quaternary structure, interacts with the cdc2 protein kinase to form a serine/threonine kinase holoenzyme complex also known as maturation promoting factor (MPF). The cyclin subunit imparts substrate specificity to the complex. When not in a complex with cdc2, interacts with spdya. Interacts with nap1l1. Interacts with nanos1.

It localises to the cytoplasm. The protein resides in the cytoskeleton. It is found in the microtubule organizing center. Its subcellular location is the centrosome. The protein localises to the nucleus. Functionally, essential for the control of the cell cycle at the G2/M (mitosis) transition. This chain is G2/mitotic-specific cyclin-B1 (ccnb1), found in Xenopus laevis (African clawed frog).